The sequence spans 81 residues: Large ribosomal subunit protein bL31B (81 aa).

This sequence belongs to the bacterial ribosomal protein bL31 family. Type B subfamily. Part of the 50S ribosomal subunit.

The protein is Large ribosomal subunit protein bL31B of Lactobacillus acidophilus (strain ATCC 700396 / NCK56 / N2 / NCFM).